We begin with the raw amino-acid sequence, 157 residues long: Protein E6 (157 aa).

Zinc fingers lie at residues 41 to 77 (CNFCGKFLDYLEACEFEVKKLSLIWKDYCVFACCRVC) and 114 to 150 (CQTCLAFLDIIEKLDCCGRGLPFHRVRNAWKGICRQC).

Belongs to the papillomaviridae E6 protein family. As to quaternary structure, forms homodimers. Interacts with ubiquitin-protein ligase UBE3A/E6-AP; this interaction stimulates UBE3A ubiquitin activity. Interacts with host BAK1.

It localises to the host cytoplasm. The protein resides in the host nucleus. Functionally, plays a major role in the induction and maintenance of cellular transformation. E6 associates with host UBE3A/E6-AP ubiquitin-protein ligase and modulates its activity. Protects host keratinocytes from apoptosis by mediating the degradation of host BAK1. May also inhibit host immune response. The polypeptide is Protein E6 (Human papillomavirus 36).